The primary structure comprises 111 residues: C-type lectin lectoxin-Enh2 (111 aa).

Residues 1–23 (MGQFTVVSLGLLAMFLSLSGAKG) form the signal peptide. A disulfide bridge connects residues Cys-26 and Cys-37. The C-type lectin domain maps to 33 to 108 (RNGVCNKLFP…CASLHPFICQ (76 aa)). The short motif at 72–74 (EPN) is the Mannose-binding element. Ca(2+) contacts are provided by Glu-80, Asn-95, and Asp-96. A disulfide bridge connects residues Cys-82 and Cys-99.

The protein belongs to the true venom lectin family. Expressed by the venom gland.

The protein localises to the secreted. Mannose-binding lectin which recognizes specific carbohydrate structures and agglutinates a variety of animal cells by binding to cell-surface glycoproteins and glycolipids. May be a calcium-dependent lectin. In Pseudoferania polylepis (Macleay's water snake), this protein is C-type lectin lectoxin-Enh2.